Consider the following 1060-residue polypeptide: Carbamoyl phosphate synthase large chain (1060 aa).

The segment at 1-401 (MPKRTDIRKI…SLLKAVRSLE (401 aa)) is carboxyphosphate synthetic domain. ATP is bound by residues R129, R169, G175, G176, Q208, I210, E215, G241, I242, H243, Q284, and E298. The 195-residue stretch at 133–327 (KNLMNQLNEP…IAKMAAKIAV (195 aa)) folds into the ATP-grasp 1 domain. The Mg(2+) site is built by Q284, E298, and N300. Positions 284, 298, and 300 each coordinate Mn(2+). The interval 402-546 (IGTAHLELDG…YTTYEQENES (145 aa)) is oligomerization domain. The tract at residues 547-929 (LVSAKPSILV…ALYKAFEASG (383 aa)) is carbamoyl phosphate synthetic domain. The ATP-grasp 2 domain occupies 671–861 (DQLIQELNIP…MAQLATQLIL (191 aa)). ATP is bound by residues R707, R746, L748, E752, G777, V778, H779, S780, Q820, and E832. The Mg(2+) site is built by Q820, E832, and N834. 3 residues coordinate Mn(2+): Q820, E832, and N834. One can recognise an MGS-like domain in the interval 930–1060 (MHLPSHGNVL…ESQSLLTKPL (131 aa)). Residues 930–1060 (MHLPSHGNVL…ESQSLLTKPL (131 aa)) form an allosteric domain region.

It belongs to the CarB family. In terms of assembly, composed of two chains; the small (or glutamine) chain promotes the hydrolysis of glutamine to ammonia, which is used by the large (or ammonia) chain to synthesize carbamoyl phosphate. Tetramer of heterodimers (alpha,beta)4. Requires Mg(2+) as cofactor. It depends on Mn(2+) as a cofactor.

The catalysed reaction is hydrogencarbonate + L-glutamine + 2 ATP + H2O = carbamoyl phosphate + L-glutamate + 2 ADP + phosphate + 2 H(+). It carries out the reaction hydrogencarbonate + NH4(+) + 2 ATP = carbamoyl phosphate + 2 ADP + phosphate + 2 H(+). Its pathway is amino-acid biosynthesis; L-arginine biosynthesis; carbamoyl phosphate from bicarbonate: step 1/1. It participates in pyrimidine metabolism; UMP biosynthesis via de novo pathway; (S)-dihydroorotate from bicarbonate: step 1/3. Large subunit of the glutamine-dependent carbamoyl phosphate synthetase (CPSase). CPSase catalyzes the formation of carbamoyl phosphate from the ammonia moiety of glutamine, carbonate, and phosphate donated by ATP, constituting the first step of 2 biosynthetic pathways, one leading to arginine and/or urea and the other to pyrimidine nucleotides. The large subunit (synthetase) binds the substrates ammonia (free or transferred from glutamine from the small subunit), hydrogencarbonate and ATP and carries out an ATP-coupled ligase reaction, activating hydrogencarbonate by forming carboxy phosphate which reacts with ammonia to form carbamoyl phosphate. This is Carbamoyl phosphate synthase large chain from Latilactobacillus sakei subsp. sakei (strain 23K) (Lactobacillus sakei subsp. sakei).